We begin with the raw amino-acid sequence, 185 residues long: HTH-type transcriptional regulator PuuR (185 aa).

The disordered stretch occupies residues 1-20 (MSDEGLAPGKRLSEIRQQQG). An HTH cro/C1-type domain is found at 12–66 (LSEIRQQQGLSQRRAAELSGLTHSAISTIEQDKVSPAISTLQKLLKVYGLSLSEF). The segment at residues 23 to 42 (QRRAAELSGLTHSAISTIEQ) is a DNA-binding region (H-T-H motif). A Cupin type-2 domain is found at 111–178 (FETYQPGTTT…TSAGICRIIS (68 aa)).

It functions in the pathway amine and polyamine degradation; putrescine degradation [regulation]. Functionally, represses puuA, puuD and puuP. This is HTH-type transcriptional regulator PuuR (puuR) from Escherichia coli (strain K12).